We begin with the raw amino-acid sequence, 254 residues long: Pimeloyl-[acyl-carrier protein] methyl ester esterase (254 aa).

The AB hydrolase-1 domain maps to 14 to 238 (VVMLHGWGLH…QASHAPFLSH (225 aa)). Substrate is bound by residues W20, 80–81 (SL), and 142–146 (FLALQ). S80 serves as the catalytic Nucleophile. Active-site residues include D204 and H232. H232 is a binding site for substrate.

The protein belongs to the AB hydrolase superfamily. Carboxylesterase BioH family. In terms of assembly, monomer.

It is found in the cytoplasm. It carries out the reaction 6-carboxyhexanoyl-[ACP] methyl ester + H2O = 6-carboxyhexanoyl-[ACP] + methanol + H(+). It participates in cofactor biosynthesis; biotin biosynthesis. The physiological role of BioH is to remove the methyl group introduced by BioC when the pimeloyl moiety is complete. It allows to synthesize pimeloyl-ACP via the fatty acid synthetic pathway through the hydrolysis of the ester bonds of pimeloyl-ACP esters. The sequence is that of Pimeloyl-[acyl-carrier protein] methyl ester esterase from Chromobacterium violaceum (strain ATCC 12472 / DSM 30191 / JCM 1249 / CCUG 213 / NBRC 12614 / NCIMB 9131 / NCTC 9757 / MK).